The chain runs to 320 residues: Malate dehydrogenase (320 aa).

NAD(+) is bound by residues 10-15 and aspartate 34; that span reads GAGNIG. The substrate site is built by arginine 83 and arginine 89. NAD(+)-binding positions include asparagine 96 and 119–121; that span reads ITN. 2 residues coordinate substrate: asparagine 121 and arginine 152. Catalysis depends on histidine 176, which acts as the Proton acceptor.

This sequence belongs to the LDH/MDH superfamily. MDH type 3 family.

The catalysed reaction is (S)-malate + NAD(+) = oxaloacetate + NADH + H(+). In terms of biological role, catalyzes the reversible oxidation of malate to oxaloacetate. This Novosphingobium aromaticivorans (strain ATCC 700278 / DSM 12444 / CCUG 56034 / CIP 105152 / NBRC 16084 / F199) protein is Malate dehydrogenase.